Consider the following 333-residue polypeptide: B3 domain-containing protein At1g32030 (333 aa).

Polar residues-rich tracts occupy residues 76 to 99 (VTVRNPEQNQQNLHRVSTSSSLLD) and 134 to 143 (PQNASSSSTL). Positions 76–179 (VTVRNPEQNQ…SEPKKAKTPY (104 aa)) are disordered. A DNA-binding region (TF-B3) is located at residues 220–328 (QSRLLMPFNT…ILSFALVLPP (109 aa)).

The protein resides in the nucleus. The chain is B3 domain-containing protein At1g32030 from Arabidopsis thaliana (Mouse-ear cress).